Here is a 197-residue protein sequence, read N- to C-terminus: Recombination protein RecR (197 aa).

A C4-type zinc finger spans residues 56–71 (CKRCGSYAETEICNIC). Residues 79–174 (HTFCVVEQPE…DVTRIAYGIT (96 aa)) form the Toprim domain.

This sequence belongs to the RecR family.

May play a role in DNA repair. It seems to be involved in an RecBC-independent recombinational process of DNA repair. It may act with RecF and RecO. This is Recombination protein RecR from Leptospira borgpetersenii serovar Hardjo-bovis (strain JB197).